The chain runs to 419 residues: MEKFRVIGSTQPLQGEVTISGAKNAALPILFASILAEEPVEVANVPHLRDIDTTMELLERLGAKVERNGSVHVDAGPINQYCAPYDLVKTMRASIWALGPLVARFGQGQVSLPGGCAIGARPVDLHIHGLEQLGATITLEDGYVKAHVDGRLQGAHIVMDKVSVGATITIMCAATLAEGTTVLDNAAREPEIVDTAMFLNKLGAKISGAGTDSITIEGVERLGGGKHAVVPDRIETGTFLVAAAVSRGKIVCRNTHAHLLEAVLAKLEEAGAEIECGEDWISLDMTGRELKAVTVRTAPHPGFPTDMQAQFTLLNMMAKGGGVITETIFENRFMHVPELKRMGAKAEIEGNTVICGDVDRLSGAQVMATDLRASASLVIAGCIAKGETIVDRIYHIDRGYERIEDKLSALGANIERFRD.

23–24 (KN) serves as a coordination point for phosphoenolpyruvate. UDP-N-acetyl-alpha-D-glucosamine is bound at residue Arg92. Catalysis depends on Cys116, which acts as the Proton donor. At Cys116 the chain carries 2-(S-cysteinyl)pyruvic acid O-phosphothioketal. UDP-N-acetyl-alpha-D-glucosamine contacts are provided by residues 121-125 (RPVDL), 161-164 (KVSV), Asp306, and Ile328.

This sequence belongs to the EPSP synthase family. MurA subfamily.

It is found in the cytoplasm. It carries out the reaction phosphoenolpyruvate + UDP-N-acetyl-alpha-D-glucosamine = UDP-N-acetyl-3-O-(1-carboxyvinyl)-alpha-D-glucosamine + phosphate. The protein operates within cell wall biogenesis; peptidoglycan biosynthesis. Cell wall formation. Adds enolpyruvyl to UDP-N-acetylglucosamine. This Vibrio cholerae serotype O1 (strain ATCC 39541 / Classical Ogawa 395 / O395) protein is UDP-N-acetylglucosamine 1-carboxyvinyltransferase.